Reading from the N-terminus, the 480-residue chain is MNAVTKITPHADYKIADISLADWGRKELDIAEHEMPGLMSIRRKHAQTTPLKDVRITGSLHMTIQTAVLIETLKDIGANVRWASCNIFSTQDHAAAAIAATGTPVFAWKGETLEEYWDCTLDALTFTLPDGTLTGPELVVDDGGDVTLLIHKGYELENGSTWVDEPASSHEESVIKALLKRVAVERPGYWARVVKDWKGVSEETTTGVHRLYQIAEAGKLLIPAINVNDSVTKSKFDNLYGCRESLADGLKRAMDVMLAGKVAVVCGYGDVGKGSAASLRAYGARVVVTEIDPICALQASMEGFEVNTIESTLGRADIYVTTTGNKDIITVEHLQAMKDQAIVCNIGHFDNEIQVDALKALKDVQKINIKPQVDKYVFPNGNAIFLLADGRLVNLGCATGHPSFVMSNSFANQTLAQIDLWEKRDTYEKKVYILPKHLDEEVARLHLEKIGVKLTTLTKDQADYLGVDVAGPYKPDHYRY.

Substrate-binding residues include T63, D142, and E203. 204-206 is a binding site for NAD(+); sequence TTT. Residues K233 and D237 each contribute to the substrate site. Residues N238, 267-272, E290, N325, 346-348, and N394 each bind NAD(+); these read GYGDVG and IGH.

It belongs to the adenosylhomocysteinase family. It depends on NAD(+) as a cofactor.

Its subcellular location is the cytoplasm. The catalysed reaction is S-adenosyl-L-homocysteine + H2O = L-homocysteine + adenosine. The protein operates within amino-acid biosynthesis; L-homocysteine biosynthesis; L-homocysteine from S-adenosyl-L-homocysteine: step 1/1. May play a key role in the regulation of the intracellular concentration of adenosylhomocysteine. This Xanthomonas oryzae pv. oryzae (strain PXO99A) protein is Adenosylhomocysteinase.